We begin with the raw amino-acid sequence, 533 residues long: NEDD8-activating enzyme E1 regulatory subunit (533 aa).

Residues 330 to 343 (DMIADSDKFIKLQN) form an interaction with uba3 region.

This sequence belongs to the ubiquitin-activating E1 family. ULA1 subfamily. Heterodimer of uba3 and nae1. The complex binds nedd8 and ube2m.

It functions in the pathway protein modification; protein neddylation. In terms of biological role, regulatory subunit of the dimeric uba3-nae1 E1 enzyme. E1 activates nedd8 by first adenylating its C-terminal glycine residue with ATP, thereafter linking this residue to the side chain of the catalytic cysteine, yielding a nedd8-uba3 thioester and free AMP. E1 finally transfers nedd8 to the catalytic cysteine of ube2m. The covalent attachment of nedd8 to target proteins is known as 'neddylation' and the process is involved in the regulation of cell growth, viability and development. The chain is NEDD8-activating enzyme E1 regulatory subunit (nae1) from Xenopus laevis (African clawed frog).